A 468-amino-acid chain; its full sequence is Heat stress transcription factor A-1e (468 aa).

A DNA-binding region spans residues 21–115 (IPPFLSKTYD…ILKSIVRRKP (95 aa)). The interval 133–199 (ACVEVGKFGL…QMMSFLAKAV (67 aa)) is hydrophobic repeat HR-A/B. Residues 211-220 (QSNEANQHIS) are compositionally biased toward polar residues. Disordered regions lie at residues 211–244 (QSNEANQHISESNKKRRLPVEDQMNSGSHGVNGL) and 268–309 (QMSN…PEVT). Residues 223–227 (NKKRR) carry the Nuclear localization signal motif. Low complexity predominate over residues 277–305 (SLSSNNGSFLLGDVPNSNISDNGSSSNGS). The short motif at 402 to 411 (DSFWEQFIGE) is the AHA element. The short motif at 454 to 461 (LTEQMGLL) is the Nuclear export signal element.

The protein belongs to the HSF family. Class A subfamily. As to quaternary structure, homotrimer. Post-translationally, exhibits temperature-dependent phosphorylation.

Its subcellular location is the cytoplasm. It is found in the nucleus. Transcriptional activator that specifically binds DNA sequence 5'-AGAAnnTTCT-3' known as heat shock promoter elements (HSE). The sequence is that of Heat stress transcription factor A-1e (HSFA1E) from Arabidopsis thaliana (Mouse-ear cress).